A 314-amino-acid polypeptide reads, in one-letter code: Inositol oxygenase 5 (314 aa).

Substrate is bound by residues R54 and 112–114; that span reads DES. Fe cation contacts are provided by H125, H150, and D151. Substrate is bound by residues K154 and 171 to 172; that span reads GD. Fe cation-binding residues include H223, H249, and D282. Residue 249–250 participates in substrate binding; sequence HS.

It belongs to the myo-inositol oxygenase family. Fe cation is required as a cofactor. Expressed in flowers and siliques.

The protein localises to the cytoplasm. The catalysed reaction is myo-inositol + O2 = D-glucuronate + H2O + H(+). The protein operates within polyol metabolism; myo-inositol degradation into D-glucuronate; D-glucuronate from myo-inositol: step 1/1. Its function is as follows. Involved in the biosynthesis of UDP-glucuronic acid (UDP-GlcA), providing nucleotide sugars for cell-wall polymers. May be also involved in plant ascorbate biosynthesis. This is Inositol oxygenase 5 (MIOX5) from Arabidopsis thaliana (Mouse-ear cress).